We begin with the raw amino-acid sequence, 354 residues long: UDP-3-O-acylglucosamine N-acyltransferase (354 aa).

H258 (proton acceptor) is an active-site residue.

This sequence belongs to the transferase hexapeptide repeat family. LpxD subfamily. As to quaternary structure, homotrimer.

It catalyses the reaction a UDP-3-O-[(3R)-3-hydroxyacyl]-alpha-D-glucosamine + a (3R)-hydroxyacyl-[ACP] = a UDP-2-N,3-O-bis[(3R)-3-hydroxyacyl]-alpha-D-glucosamine + holo-[ACP] + H(+). The protein operates within bacterial outer membrane biogenesis; LPS lipid A biosynthesis. Its function is as follows. Catalyzes the N-acylation of UDP-3-O-acylglucosamine using 3-hydroxyacyl-ACP as the acyl donor. Is involved in the biosynthesis of lipid A, a phosphorylated glycolipid that anchors the lipopolysaccharide to the outer membrane of the cell. The polypeptide is UDP-3-O-acylglucosamine N-acyltransferase (Sinorhizobium medicae (strain WSM419) (Ensifer medicae)).